An 856-amino-acid polypeptide reads, in one-letter code: Lon protease (856 aa).

The region spanning 68–261 is the Lon N-terminal domain; that stretch reads FPVLPLRDIV…KVLGLMESEI (194 aa). 412–419 is an ATP binding site; sequence GPPGVGKT. One can recognise a Lon proteolytic domain in the interval 647-828; the sequence is EDQVGVVTGL…DEVLHHALLR (182 aa). Active-site residues include serine 734 and lysine 777.

This sequence belongs to the peptidase S16 family. Homohexamer. Organized in a ring with a central cavity.

The protein localises to the cytoplasm. The catalysed reaction is Hydrolysis of proteins in presence of ATP.. Functionally, ATP-dependent serine protease that mediates the selective degradation of mutant and abnormal proteins as well as certain short-lived regulatory proteins. Required for cellular homeostasis and for survival from DNA damage and developmental changes induced by stress. Degrades polypeptides processively to yield small peptide fragments that are 5 to 10 amino acids long. Binds to DNA in a double-stranded, site-specific manner. The sequence is that of Lon protease from Azorhizobium caulinodans (strain ATCC 43989 / DSM 5975 / JCM 20966 / LMG 6465 / NBRC 14845 / NCIMB 13405 / ORS 571).